Here is a 322-residue protein sequence, read N- to C-terminus: Ubiquinone biosynthesis O-methyltransferase, mitochondrial (322 aa).

The transit peptide at M1–F37 directs the protein to the mitochondrion. The interval A46 to S75 is disordered. Residues R108, G139, D160, and L205 each coordinate S-adenosyl-L-methionine. Mg(2+)-binding residues include E206, E209, and H210.

This sequence belongs to the class I-like SAM-binding methyltransferase superfamily. UbiG/COQ3 family. In terms of assembly, component of a multi-subunit COQ enzyme complex. It depends on Mg(2+) as a cofactor.

The protein resides in the mitochondrion inner membrane. The catalysed reaction is a 3,4-dihydroxy-5-(all-trans-polyprenyl)benzoate + S-adenosyl-L-methionine = a 4-hydroxy-3-methoxy-5-(all-trans-polyprenyl)benzoate + S-adenosyl-L-homocysteine + H(+). It carries out the reaction a 3-demethylubiquinone + S-adenosyl-L-methionine = a ubiquinone + S-adenosyl-L-homocysteine. It catalyses the reaction a 3-demethylubiquinol + S-adenosyl-L-methionine = a ubiquinol + S-adenosyl-L-homocysteine + H(+). It participates in cofactor biosynthesis; ubiquinone biosynthesis. In terms of biological role, O-methyltransferase required for two non-consecutive steps during ubiquinone biosynthesis. Catalyzes the 2 O-methylation of 3,4-dihydroxy-5-(all-trans-polyprenyl)benzoic acid into 4-hydroxy-3-methoxy-5-(all-trans-polyprenyl)benzoic acid. Also catalyzes the last step of ubiquinone biosynthesis by mediating methylation of 3-demethylubiquinone into ubiquinone. Also able to mediate the methylation of 3-demethylubiquinol into ubiquinol. The polypeptide is Ubiquinone biosynthesis O-methyltransferase, mitochondrial (Arabidopsis thaliana (Mouse-ear cress)).